Reading from the N-terminus, the 143-residue chain is Transcriptional regulator MraZ (143 aa).

2 SpoVT-AbrB domains span residues 5–47 (EYQH…PKEE) and 76–119 (AGEC…SRER).

This sequence belongs to the MraZ family. Forms oligomers.

It is found in the cytoplasm. Its subcellular location is the nucleoid. This Heliobacterium modesticaldum (strain ATCC 51547 / Ice1) protein is Transcriptional regulator MraZ.